The primary structure comprises 61 residues: Large ribosomal subunit protein uL30 (61 aa).

Belongs to the universal ribosomal protein uL30 family. As to quaternary structure, part of the 50S ribosomal subunit.

The chain is Large ribosomal subunit protein uL30 from Chlorobaculum parvum (strain DSM 263 / NCIMB 8327) (Chlorobium vibrioforme subsp. thiosulfatophilum).